We begin with the raw amino-acid sequence, 185 residues long: Comitin (185 aa).

In terms of domain architecture, Bulb-type lectin spans 1-123 (MELLRQGEHL…YKQILYSSKP (123 aa)). The interval 138–185 (SGHPQSAYPPQQPGYGYPAQPGYPPQPGYPPQHGYPPQHGYPQQPGYY) is disordered. Low complexity predominate over residues 141–157 (PQSAYPPQQPGYGYPAQ). A run of 5 repeats spans residues 153 to 158 (GYPAQP), 159 to 164 (GYPPQP), 165 to 170 (GYPPQH), 171 to 176 (GYPPQH), and 177 to 182 (GYPQQP). The 5 X 6 AA tandem repeats of G-Y-P-X-Q-[PH] stretch occupies residues 153-182 (GYPAQPGYPPQPGYPPQHGYPPQHGYPQQP). Residues 158-171 (PGYPPQPGYPPQHG) show a composition bias toward pro residues. The segment covering 172–185 (YPPQHGYPQQPGYY) has biased composition (low complexity).

Homodimer in solution. The N-terminus is blocked.

The protein resides in the golgi apparatus membrane. The protein localises to the endomembrane system. Its subcellular location is the cytoplasm. It is found in the cytoskeleton. In terms of biological role, may have a role in cell motility. It has high affinity for both G-actin and F-actin. Binds to vesicle membranes via mannose residues and, by way of its interaction with actin, links these membranes to the cytoskeleton. The chain is Comitin (comA) from Dictyostelium discoideum (Social amoeba).